The sequence spans 603 residues: Peroxisomal targeting signal receptor (603 aa).

Cysteine 10 participates in a covalent cross-link: Glycyl cysteine thioester (Cys-Gly) (interchain with G-Cter in ubiquitin). Positions 11–33 (SANSNAIAQFNKHTQQDRSLQRQ) are amphipathic helix 1 (AH1). Residue lysine 22 forms a Glycyl lysine isopeptide (Lys-Gly) (interchain with G-Cter in ubiquitin) linkage. A disordered region spans residues 23-49 (HTQQDRSLQRQAANQQGIVQNGQGFKK). The segment covering 31–45 (QRQAANQQGIVQNGQ) has biased composition (polar residues). The amphipathic helix 2 (AH2) stretch occupies residues 58–76 (RQNMDQFMNNGPSQSNFQF). Short sequence motifs (wxxxF/Y motif) lie at residues 99–103 (WTNEF), 128–132 (WATEF), and 192–196 (WDNQF). Residues 232–248 (FQEVWDSLNSEEVENDF) are amphipathic helix 4 (AH4). A WxxxF/Y motif 4 motif is present at residues 271–275 (WEKDF). TPR repeat units follow at residues 304–338 (ESDPYEIGLQLMENGAKLSEAALAFEAAIQRNEGH), 339–372 (INAWLKLGEVQTQNEKEIAGISALEKCLELHPEN), 449–482 (PDVQMGLGVLFYANEDFDKTIDCFKAALSIKPDD), 484–516 (VLWNRLGASLANSNRSEEAVDAYFKALELKPTF), and 518–550 (RARYNLGVSCINIGCYKEAAEHLLSGLSMHQVE).

This sequence belongs to the peroxisomal targeting signal receptor family. In terms of assembly, interacts (via WxxxF/Y and LVxEF motifs) with PEX14; promoting translocation through the PEX13-PEX14 docking complex. Post-translationally, monoubiquitinated at Cys-10 by PEX2 during PEX5 passage through the retrotranslocation channel: monoubiquitination acts as a signal for PEX5 extraction and is required for proper export from peroxisomes and recycling. When PEX5 recycling is compromised, polyubiquitinated at Lys-22 by PEX10 during its passage through the retrotranslocation channel, leading to its degradation.

The protein resides in the cytoplasm. It is found in the cytosol. It localises to the peroxisome matrix. Its function is as follows. Receptor that mediates peroxisomal import of proteins containing a C-terminal PTS1-type tripeptide peroxisomal targeting signal (SKL-type). Binds to cargo proteins containing a PTS1 peroxisomal targeting signal in the cytosol, and translocates them into the peroxisome matrix by passing through the PEX13-PEX14 docking complex along with cargo proteins. PEX5 receptor is then retrotranslocated into the cytosol, leading to release of bound cargo in the peroxisome matrix, and reset for a subsequent peroxisome import cycle. This Debaryomyces hansenii (strain ATCC 36239 / CBS 767 / BCRC 21394 / JCM 1990 / NBRC 0083 / IGC 2968) (Yeast) protein is Peroxisomal targeting signal receptor (PEX5).